The sequence spans 833 residues: ERAD-associated E3 ubiquitin-protein ligase component HRD3 (833 aa).

The first 20 residues, 1–20 (MITLLLYLCVICNAIVLIRA), serve as a signal peptide directing secretion. N-linked (GlcNAc...) asparagine glycosylation is found at Asn101, Asn123, and Asn142. One copy of the Sel1-like 1 repeat lies at 103 to 139 (SEATYTLSQIHLWSQYNFPHNMTLAHKYLEKFNDLTH). Sel1-like repeat units follow at residues 143–186 (HSAI…QLGN), 187–222 (LKAK…EQLR), 413–445 (GRAC…KTQA), 552–595 (ETAQ…KQGN), 596–627 (IDAG…LKYS), and 628–663 (IQAI…EHDH). Asn429 carries N-linked (GlcNAc...) asparagine glycosylation. Residue Asn611 is glycosylated (N-linked (GlcNAc...) asparagine). Residues 768–788 (LVTMGCILGIFLLSILMSTLA) traverse the membrane as a helical segment. The tract at residues 805-824 (NGNRQQEQQQQQQAQGPPGW) is disordered. The span at 809–819 (QQEQQQQQQAQ) shows a compositional bias: low complexity.

It belongs to the sel-1 family. As to quaternary structure, component of the HRD1 ubiquitin ligase complex which contains the E3 ligase HRD1, its cofactors HRD3, USA1 and DER1, substrate recruiting factor YOS9 and CDC48-binding protein UBX2. Within the complex, interacts directly with HRD1 and YOS9 (via N-terminus). In ERAD-L, HRD3 and YOS9 jointly bind misfolded glycoproteins in the endoplasmic reticulum (ER) lumen. Movement of ERAD-L substrates through the ER membrane is facilitated by HRD1 and DER1 which have lateral gates facing each other and which distort the membrane region between the lateral gates, making it much thinner than a normal phospholipid bilayer. Substrates insert into the membrane as a hairpin loop with one strand interacting with DER1 and the other with HRD1. The HRD1 complex interacts with the heterotrimeric CDC48-NPL4-UFD1 ATPase complex which is recruited by UBX2 via its interaction with CDC48 and which moves ubiquitinated substrates to the cytosol for targeting to the proteasome. The HRD1 complex interacts with the ERAD substrates HMG1 and HMG2. Interacts with KAR2.

The protein resides in the endoplasmic reticulum membrane. Functionally, component of the endoplasmic reticulum quality control (ERQC) system involved in ubiquitin-dependent degradation of misfolded endoplasmic reticulum proteins. Component of the HRD1 ubiquitin ligase complex, which is part of the ERAD-L and ERAD-M pathways responsible for the rapid degradation of soluble lumenal and membrane proteins with misfolded lumenal domains (ERAD-L), or ER-membrane proteins with misfolded transmembrane domains (ERAD-M). ERAD-L substrates are ubiquitinated through HRD1 in conjunction with the E2 ubiquitin-conjugating enzymes UBC1 and UBC7-CUE1. Ubiquitinated substrates are then removed to the cytosol via the action of the CDC48-NPL4-UFD1 ATPase complex and targeted to the proteasome. ERAD-M substrates are processed by the same HRD1-HRD3 core complex, but only a subset of the other components is required for ERAD-M. Stabilizes the HRD1 ubiquitin-protein ligase. Also functions in recruiting misfolded protein substrates in conjunction with YOS9. The sequence is that of ERAD-associated E3 ubiquitin-protein ligase component HRD3 (HRD3) from Saccharomyces cerevisiae (strain ATCC 204508 / S288c) (Baker's yeast).